Here is a 91-residue protein sequence, read N- to C-terminus: CRISPR-associated endoribonuclease Cas2 2 (91 aa).

A Mg(2+)-binding site is contributed by Asp6.

The protein belongs to the CRISPR-associated endoribonuclease Cas2 protein family. In terms of assembly, homodimer, forms a heterotetramer with a Cas1 homodimer. Mg(2+) serves as cofactor.

In terms of biological role, CRISPR (clustered regularly interspaced short palindromic repeat), is an adaptive immune system that provides protection against mobile genetic elements (viruses, transposable elements and conjugative plasmids). CRISPR clusters contain sequences complementary to antecedent mobile elements and target invading nucleic acids. CRISPR clusters are transcribed and processed into CRISPR RNA (crRNA). Functions as a ssRNA-specific endoribonuclease. Involved in the integration of spacer DNA into the CRISPR cassette. The chain is CRISPR-associated endoribonuclease Cas2 2 from Moorella thermoacetica (strain ATCC 39073 / JCM 9320).